A 228-amino-acid polypeptide reads, in one-letter code: Imidazole glycerol phosphate synthase subunit HisH (228 aa).

The Glutamine amidotransferase type-1 domain occupies 4 to 218; it reads DIAVVDYGMG…VTWNPGEHAS (215 aa). Cys-83 (nucleophile) is an active-site residue. Active-site residues include His-193 and Glu-195.

In terms of assembly, heterodimer of HisH and HisF.

The protein resides in the cytoplasm. It carries out the reaction 5-[(5-phospho-1-deoxy-D-ribulos-1-ylimino)methylamino]-1-(5-phospho-beta-D-ribosyl)imidazole-4-carboxamide + L-glutamine = D-erythro-1-(imidazol-4-yl)glycerol 3-phosphate + 5-amino-1-(5-phospho-beta-D-ribosyl)imidazole-4-carboxamide + L-glutamate + H(+). The enzyme catalyses L-glutamine + H2O = L-glutamate + NH4(+). Its pathway is amino-acid biosynthesis; L-histidine biosynthesis; L-histidine from 5-phospho-alpha-D-ribose 1-diphosphate: step 5/9. IGPS catalyzes the conversion of PRFAR and glutamine to IGP, AICAR and glutamate. The HisH subunit catalyzes the hydrolysis of glutamine to glutamate and ammonia as part of the synthesis of IGP and AICAR. The resulting ammonia molecule is channeled to the active site of HisF. In Thiobacillus denitrificans (strain ATCC 25259 / T1), this protein is Imidazole glycerol phosphate synthase subunit HisH.